A 1819-amino-acid polypeptide reads, in one-letter code: U3 small nucleolar RNA-associated protein 10 (1819 aa).

One copy of the HEAT 1 repeat lies at 583–620 (LDFQAILPFLLVALADPSERIRREAAAALAAIGGIYKK). Helical transmembrane passes span 945–965 (IQSG…AIVN) and 1001–1021 (ALLL…HSVM). HEAT repeat units lie at residues 1045 to 1082 (QTID…AFEH), 1269 to 1306 (LTLV…QNPE), 1313 to 1351 (IRVL…KYGK), and 1775 to 1812 (ALLP…VLGE).

Belongs to the HEATR1/UTP10 family. Component of the ribosomal small subunit (SSU) processome.

It is found in the nucleus. The protein localises to the nucleolus. Its subcellular location is the membrane. Involved in nucleolar processing of pre-18S ribosomal RNA. Involved in ribosome biosynthesis. The protein is U3 small nucleolar RNA-associated protein 10 of Aspergillus clavatus (strain ATCC 1007 / CBS 513.65 / DSM 816 / NCTC 3887 / NRRL 1 / QM 1276 / 107).